The chain runs to 1412 residues: DNA-directed RNA polymerase subunit beta' (1412 aa).

Residues Cys-70, Cys-72, Cys-85, and Cys-88 each coordinate Zn(2+). Asp-460, Asp-462, and Asp-464 together coordinate Mg(2+). Cys-819, Cys-893, Cys-900, and Cys-903 together coordinate Zn(2+). The segment at 1393–1412 (EAFEFGTPSAPAEEPQHPAE) is disordered.

This sequence belongs to the RNA polymerase beta' chain family. As to quaternary structure, the RNAP catalytic core consists of 2 alpha, 1 beta, 1 beta' and 1 omega subunit. When a sigma factor is associated with the core the holoenzyme is formed, which can initiate transcription. The cofactor is Mg(2+). Zn(2+) serves as cofactor.

The enzyme catalyses RNA(n) + a ribonucleoside 5'-triphosphate = RNA(n+1) + diphosphate. Its function is as follows. DNA-dependent RNA polymerase catalyzes the transcription of DNA into RNA using the four ribonucleoside triphosphates as substrates. This Burkholderia mallei (strain NCTC 10229) protein is DNA-directed RNA polymerase subunit beta'.